A 210-amino-acid polypeptide reads, in one-letter code: N-(5'-phosphoribosyl)anthranilate isomerase (210 aa).

It belongs to the TrpF family.

It catalyses the reaction N-(5-phospho-beta-D-ribosyl)anthranilate = 1-(2-carboxyphenylamino)-1-deoxy-D-ribulose 5-phosphate. It participates in amino-acid biosynthesis; L-tryptophan biosynthesis; L-tryptophan from chorismate: step 3/5. The sequence is that of N-(5'-phosphoribosyl)anthranilate isomerase from Crocosphaera subtropica (strain ATCC 51142 / BH68) (Cyanothece sp. (strain ATCC 51142)).